Reading from the N-terminus, the 247-residue chain is Bidirectional sugar transporter SWEET1 (247 aa).

The Extracellular segment spans residues 1 to 6; that stretch reads MNIAHT. A helical transmembrane segment spans residues 7–27; sequence IFGVFGNATALFLFLAPSITF. Positions 7–94 constitute a MtN3/slv 1 domain; sequence IFGVFGNATA…LIFLFYAPKK (88 aa). Residues 28–41 are Cytoplasmic-facing; that stretch reads KRIIKNKSTEQFSG. Residues 42–62 form a helical membrane-spanning segment; it reads IPYPMTLLNCLLSAWYGLPFV. Residues 63 to 71 are Extracellular-facing; the sequence is SKDNTLVST. Residues 72–92 traverse the membrane as a helical segment; sequence INGTGAVIETVYVLIFLFYAP. Residues 93-98 lie on the Cytoplasmic side of the membrane; it reads KKEKIK. Residues 99-119 form a helical membrane-spanning segment; the sequence is IFGIFSCVLAVFATVALVSLF. At 120-127 the chain is on the extracellular side; sequence ALQGNGRK. A helical transmembrane segment spans residues 128-148; the sequence is LFCGLAATVFSIIMYASPLSI. Residues 130–213 enclose the MtN3/slv 2 domain; it reads CGLAATVFSI…ILYFIYCGNK (84 aa). The Cytoplasmic segment spans residues 149–162; it reads MRLVVKTKSVEFMP. The chain crosses the membrane as a helical span at residues 163–183; the sequence is FFLSLFVFLCGTSWFVYGLIG. Residues 184–187 are Extracellular-facing; it reads RDPF. A helical membrane pass occupies residues 188 to 208; the sequence is VAIPNGFGCALGTLQLILYFI. The Cytoplasmic segment spans residues 209-247; sequence YCGNKGEKSADAQKDEKSVEMKDDEKKQNVVNGKQDLQV. Positions 221 to 236 are enriched in basic and acidic residues; that stretch reads QKDEKSVEMKDDEKKQ. Residues 221–247 are disordered; the sequence is QKDEKSVEMKDDEKKQNVVNGKQDLQV. The span at 237-247 shows a compositional bias: polar residues; sequence NVVNGKQDLQV.

The protein belongs to the SWEET sugar transporter family. As to quaternary structure, forms homooligomers and heterooligomers with SWEET9, SWEET11, SWEET13, SWEET15, SWEET16 and SWEET17. As to expression, mainly expressed in flowers.

It localises to the cell membrane. Its subcellular location is the endoplasmic reticulum membrane. Functionally, mediates both low-affinity uptake and efflux of sugar across the plasma membrane. Can transport glucose, and, to a lower extent, mannose, fructose and galactose. This Arabidopsis thaliana (Mouse-ear cress) protein is Bidirectional sugar transporter SWEET1.